A 508-amino-acid polypeptide reads, in one-letter code: Light-independent protochlorophyllide reductase subunit B (508 aa).

D36 contributes to the [4Fe-4S] cluster binding site. The Proton donor role is filled by D294. 429–430 is a binding site for substrate; sequence GM.

It belongs to the ChlB/BchB/BchZ family. In terms of assembly, protochlorophyllide reductase is composed of three subunits; ChlL, ChlN and ChlB. Forms a heterotetramer of two ChlB and two ChlN subunits. Requires [4Fe-4S] cluster as cofactor.

It catalyses the reaction chlorophyllide a + oxidized 2[4Fe-4S]-[ferredoxin] + 2 ADP + 2 phosphate = protochlorophyllide a + reduced 2[4Fe-4S]-[ferredoxin] + 2 ATP + 2 H2O. The protein operates within porphyrin-containing compound metabolism; chlorophyll biosynthesis (light-independent). Its function is as follows. Component of the dark-operative protochlorophyllide reductase (DPOR) that uses Mg-ATP and reduced ferredoxin to reduce ring D of protochlorophyllide (Pchlide) to form chlorophyllide a (Chlide). This reaction is light-independent. The NB-protein (ChlN-ChlB) is the catalytic component of the complex. In Picosynechococcus sp. (strain ATCC 27264 / PCC 7002 / PR-6) (Agmenellum quadruplicatum), this protein is Light-independent protochlorophyllide reductase subunit B.